Reading from the N-terminus, the 976-residue chain is Vacuolar membrane protease (976 aa).

At 1-15 (MKLKSVFRSVLKYRK) the chain is on the cytoplasmic side. The chain crosses the membrane as a helical span at residues 16 to 36 (TNLSLLLLITYSIITLLYIFD). Over 37-359 (HERYKLNLPK…KFFVISAKTL (323 aa)) the chain is Vacuolar. 2 N-linked (GlcNAc...) asparagine glycosylation sites follow: asparagine 96 and asparagine 121. Zn(2+)-binding residues include histidine 156 and aspartate 168. The N-linked (GlcNAc...) asparagine glycan is linked to asparagine 189. Glutamate 200 (proton acceptor) is an active-site residue. Glutamate 201 provides a ligand contact to Zn(2+). Asparagine 212 and asparagine 217 each carry an N-linked (GlcNAc...) asparagine glycan. Glutamate 226 and histidine 300 together coordinate Zn(2+). The chain crosses the membrane as a helical span at residues 360–380 (FYWNCIFLLVSPVVAIGLYLI). Over 381–392 (SRDRMTWKSHSW) the chain is Cytoplasmic. Residues 393–412 (LSWTRFPLSLAAGIIVQKLF) traverse the membrane as a helical segment. The Vacuolar portion of the chain corresponds to 413–428 (SNDIIRSNPLTFSRNY). A helical transmembrane segment spans residues 429 to 449 (FWPISAFFTQVIFTSYVLINC). At 450 to 461 (SNFFFPCADMKS) the chain is on the cytoplasmic side. A helical transmembrane segment spans residues 462–482 (LSIIELFIILWTILLFTSKLL). The Vacuolar portion of the chain corresponds to 483-496 (YSSDYRYTGLYPLS). The helical transmembrane segment at 497–517 (IFFLLSTIAAILRLLALALGM) threads the bilayer. Over 518–627 (RTRKRLGREC…NSLKLEYTDY (110 aa)) the chain is Cytoplasmic. Residues 528–610 (RDHHSNYSSH…PLLKGSNSME (83 aa)) are disordered. Residues 549–558 (NLEQPQDQFT) are compositionally biased toward polar residues. Residues 559–570 (SSQDDQASIQDD) show a composition bias toward low complexity. Residues 582-601 (NVDEDHGMDSSSQQHDERVP) show a composition bias toward basic and acidic residues. Residues 628–648 (AWIIQFLLIVPIPSFILFNSV) form a helical membrane-spanning segment. Over 649–668 (DVIMDALNHTVQEGSKATFD) the chain is Vacuolar. Asparagine 656 carries N-linked (GlcNAc...) asparagine glycosylation. Residues 669 to 689 (VLRFGMVGSILMALPILPFFY) traverse the membrane as a helical segment. Over 690–692 (KVN) the chain is Cytoplasmic. Residues 693–713 (YITISLTALLFLISASKTLLV) traverse the membrane as a helical segment. The Vacuolar portion of the chain corresponds to 714–976 (HPFTNSNPLK…LVIVKDAIIL (263 aa)). Asparagine 768, asparagine 796, asparagine 811, asparagine 866, and asparagine 937 each carry an N-linked (GlcNAc...) asparagine glycan.

This sequence belongs to the peptidase M28 family. Zn(2+) is required as a cofactor.

The protein resides in the vacuole membrane. Functionally, may be involved in vacuolar sorting and osmoregulation. The sequence is that of Vacuolar membrane protease from Saccharomyces cerevisiae (strain Lalvin EC1118 / Prise de mousse) (Baker's yeast).